Reading from the N-terminus, the 332-residue chain is Glycerol-3-phosphate dehydrogenase [NAD(P)+] (332 aa).

NADPH-binding residues include Trp-13, Arg-33, and Lys-107. Sn-glycerol 3-phosphate is bound by residues Lys-107, Gly-136, and Ser-138. Ala-140 provides a ligand contact to NADPH. Lys-191, Asp-244, Ser-254, Arg-255, and Asn-256 together coordinate sn-glycerol 3-phosphate. Lys-191 acts as the Proton acceptor in catalysis. Arg-255 is a binding site for NADPH. Glu-280 lines the NADPH pocket.

Belongs to the NAD-dependent glycerol-3-phosphate dehydrogenase family.

The protein resides in the cytoplasm. The catalysed reaction is sn-glycerol 3-phosphate + NAD(+) = dihydroxyacetone phosphate + NADH + H(+). It carries out the reaction sn-glycerol 3-phosphate + NADP(+) = dihydroxyacetone phosphate + NADPH + H(+). It participates in membrane lipid metabolism; glycerophospholipid metabolism. Catalyzes the reduction of the glycolytic intermediate dihydroxyacetone phosphate (DHAP) to sn-glycerol 3-phosphate (G3P), the key precursor for phospholipid synthesis. The chain is Glycerol-3-phosphate dehydrogenase [NAD(P)+] from Alkalilimnicola ehrlichii (strain ATCC BAA-1101 / DSM 17681 / MLHE-1).